Consider the following 458-residue polypeptide: Putative long chain fatty acid-CoA ligase VraA (458 aa).

Belongs to the ATP-dependent AMP-binding enzyme family.

The sequence is that of Putative long chain fatty acid-CoA ligase VraA (vraA) from Staphylococcus aureus (strain MRSA252).